The sequence spans 200 residues: 3-isopropylmalate dehydratase small subunit (200 aa).

This sequence belongs to the LeuD family. LeuD type 1 subfamily. As to quaternary structure, heterodimer of LeuC and LeuD.

The enzyme catalyses (2R,3S)-3-isopropylmalate = (2S)-2-isopropylmalate. It participates in amino-acid biosynthesis; L-leucine biosynthesis; L-leucine from 3-methyl-2-oxobutanoate: step 2/4. Its function is as follows. Catalyzes the isomerization between 2-isopropylmalate and 3-isopropylmalate, via the formation of 2-isopropylmaleate. This chain is 3-isopropylmalate dehydratase small subunit, found in Campylobacter jejuni subsp. jejuni serotype O:6 (strain 81116 / NCTC 11828).